A 185-amino-acid polypeptide reads, in one-letter code: UPF0301 protein Shew_1144 (185 aa).

Belongs to the UPF0301 (AlgH) family.

This chain is UPF0301 protein Shew_1144, found in Shewanella loihica (strain ATCC BAA-1088 / PV-4).